The sequence spans 327 residues: Leucotoxin LukD (327 aa).

Residues 1 to 26 (MKIEKLGKSSVASSIALLLLSNTVDA) form the signal peptide.

The protein belongs to the aerolysin family. As to quaternary structure, toxicity requires sequential binding and synergistic association of a class S and a class F component which form heterooligomeric complexes. LukE (class S) associates with LukD (class F). LukD can also associate with HlgA.

It is found in the secreted. Functionally, part of a bi-component leucotoxin that acts by forming pores in the membrane of the target cells. LukE-LukD is as effective as the Panton-Valentine leucocidin (PVL) for inducing dermonecrosis when injected in the rabbit skin, but not hemolytic and poorly leucotoxic on human blood cells compared to other leucotoxins expressed by S.aureus. HlgA-LukD is a Ca(2+) channel inducer. This Staphylococcus aureus protein is Leucotoxin LukD (lukD).